The following is a 510-amino-acid chain: GMP synthase [glutamine-hydrolyzing] (510 aa).

A Glutamine amidotransferase type-1 domain is found at 5–195; that stretch reads LVIVVDFGGQ…LFDICNLKGD (191 aa). C82 functions as the Nucleophile in the catalytic mechanism. Residues H169 and E171 contribute to the active site. Residues 196 to 385 enclose the GMPS ATP-PPase domain; the sequence is WSMSSFVDEK…LGIPHKLVWR (190 aa). ATP is bound at residue 223–229; sequence SGGVDSS.

As to quaternary structure, homodimer.

It catalyses the reaction XMP + L-glutamine + ATP + H2O = GMP + L-glutamate + AMP + diphosphate + 2 H(+). It functions in the pathway purine metabolism; GMP biosynthesis; GMP from XMP (L-Gln route): step 1/1. Catalyzes the synthesis of GMP from XMP. In Clostridium kluyveri (strain NBRC 12016), this protein is GMP synthase [glutamine-hydrolyzing].